Reading from the N-terminus, the 432-residue chain is C4-dicarboxylate transport protein (432 aa).

8 helical membrane passes run 8–28 (ILYVQVLFAICVGILLGHYWP), 44–64 (LIKMIIGPIIFCTVVTGIAGM), 78–98 (LLYFEVVSTFALLIGLGAAHL), 148–168 (GDILQILLVSLFFGAALAVLG), 188–208 (IVHVITKVAPIGAFGAMAFTI), 222–242 (LIGTFYFTAIIFVLVVLGTIA), 307–327 (IYMTMAVIFIAQATGIELTLM), and 355–375 (AATLAVVPTIPVAGMVLILGI).

It belongs to the dicarboxylate/amino acid:cation symporter (DAACS) (TC 2.A.23) family.

Its subcellular location is the cell inner membrane. Responsible for the transport of dicarboxylates such as succinate, fumarate, and malate from the periplasm across the membrane. The sequence is that of C4-dicarboxylate transport protein from Cupriavidus necator (strain ATCC 17699 / DSM 428 / KCTC 22496 / NCIMB 10442 / H16 / Stanier 337) (Ralstonia eutropha).